Reading from the N-terminus, the 149-residue chain is Large ribosomal subunit protein eL19 (149 aa).

Residues valine 45–glutamate 94 form a disordered region. A compositionally biased stretch (basic and acidic residues) spans arginine 62 to glycine 73. A compositionally biased stretch (basic residues) spans histidine 74–alanine 85.

This sequence belongs to the eukaryotic ribosomal protein eL19 family. In terms of assembly, part of the 50S ribosomal subunit.

In terms of biological role, binds to the 23S rRNA. The chain is Large ribosomal subunit protein eL19 from Halobacterium salinarum (strain ATCC 700922 / JCM 11081 / NRC-1) (Halobacterium halobium).